The following is a 339-amino-acid chain: Phosphate acyltransferase (339 aa).

This sequence belongs to the PlsX family. As to quaternary structure, homodimer. Probably interacts with PlsY.

It localises to the cytoplasm. It carries out the reaction a fatty acyl-[ACP] + phosphate = an acyl phosphate + holo-[ACP]. The protein operates within lipid metabolism; phospholipid metabolism. Catalyzes the reversible formation of acyl-phosphate (acyl-PO(4)) from acyl-[acyl-carrier-protein] (acyl-ACP). This enzyme utilizes acyl-ACP as fatty acyl donor, but not acyl-CoA. This is Phosphate acyltransferase from Acetivibrio thermocellus (strain ATCC 27405 / DSM 1237 / JCM 9322 / NBRC 103400 / NCIMB 10682 / NRRL B-4536 / VPI 7372) (Clostridium thermocellum).